The chain runs to 490 residues: Putative alanine aminotransferase (490 aa).

The pyridoxal 5'-phosphate site is built by alanine 157, serine 158, tyrosine 183, asparagine 239, and serine 308. An N6-(pyridoxal phosphate)lysine modification is found at lysine 311. Residue arginine 320 coordinates pyridoxal 5'-phosphate.

The protein belongs to the class-I pyridoxal-phosphate-dependent aminotransferase family. Alanine aminotransferase subfamily. As to quaternary structure, homodimer. Pyridoxal 5'-phosphate serves as cofactor.

It is found in the cytoplasm. Its subcellular location is the mitochondrion. The enzyme catalyses L-alanine + 2-oxoglutarate = pyruvate + L-glutamate. The protein operates within amino-acid degradation; L-alanine degradation via transaminase pathway; pyruvate from L-alanine: step 1/1. Its function is as follows. Alanine aminotransferase involved in both alanine biosynthesis and utilization. The chain is Putative alanine aminotransferase (alt1) from Schizosaccharomyces pombe (strain 972 / ATCC 24843) (Fission yeast).